The following is a 126-amino-acid chain: Histone H2B type 1-D (126 aa).

Positions 1–12 (MPEPTKSAPAPK) are enriched in low complexity. The disordered stretch occupies residues 1-36 (MPEPTKSAPAPKKGSKKAVTKAQKKDGKKRKRSRKE). N-acetylproline is present on proline 2. Glutamate 3 carries the ADP-ribosyl glutamic acid modification. An N6-(2-hydroxyisobutyryl)lysine; alternate modification is found at lysine 6. Lysine 6 carries the post-translational modification N6-(beta-hydroxybutyryl)lysine; alternate. The residue at position 6 (lysine 6) is an N6-acetyllysine; alternate. Lysine 6 is subject to N6-butyryllysine; alternate. Position 6 is an N6-crotonyllysine; alternate (lysine 6). Residue lysine 6 is modified to N6-lactoyllysine; alternate. A Glycyl lysine isopeptide (Lys-Gly) (interchain with G-Cter in SUMO2); alternate cross-link involves residue lysine 6. Serine 7 bears the ADP-ribosylserine mark. N6-(beta-hydroxybutyryl)lysine; alternate is present on lysine 12. N6-acetyllysine; alternate occurs at positions 12 and 13. 2 positions are modified to N6-crotonyllysine; alternate: lysine 12 and lysine 13. Residue lysine 12 is modified to N6-lactoyllysine; alternate. Position 13 is an N6-(2-hydroxyisobutyryl)lysine; alternate (lysine 13). Serine 15 bears the Phosphoserine; by STK4/MST1 mark. N6-acetyllysine; alternate occurs at positions 16, 17, 21, and 24. N6-crotonyllysine; alternate occurs at positions 16, 17, 21, and 24. 4 positions are modified to N6-lactoyllysine; alternate: lysine 16, lysine 17, lysine 21, and lysine 24. N6-(beta-hydroxybutyryl)lysine; alternate is present on residues lysine 17 and lysine 21. The residue at position 17 (lysine 17) is an N6-glutaryllysine; alternate. 2 positions are modified to N6-(2-hydroxyisobutyryl)lysine; alternate: lysine 21 and lysine 24. Lysine 21 carries the post-translational modification N6-butyryllysine; alternate. Lysine 21 participates in a covalent cross-link: Glycyl lysine isopeptide (Lys-Gly) (interchain with G-Cter in SUMO2); alternate. Lysine 25 carries the N6-(2-hydroxyisobutyryl)lysine modification. The residue at position 35 (lysine 35) is an N6-(2-hydroxyisobutyryl)lysine; alternate. Lysine 35 carries the post-translational modification N6-(beta-hydroxybutyryl)lysine; alternate. Lysine 35 is modified (N6-crotonyllysine; alternate). An N6-glutaryllysine; alternate modification is found at lysine 35. Lysine 35 carries the post-translational modification N6-succinyllysine; alternate. Residue lysine 35 forms a Glycyl lysine isopeptide (Lys-Gly) (interchain with G-Cter in ubiquitin); alternate linkage. Glutamate 36 is modified (polyADP-ribosyl glutamic acid). The residue at position 37 (serine 37) is a Phosphoserine; by AMPK. Lysine 44, lysine 47, and lysine 58 each carry N6-(2-hydroxyisobutyryl)lysine; alternate. Lysine 44 carries the post-translational modification N6-lactoyllysine; alternate. Lysine 44 and lysine 47 each carry N6-glutaryllysine; alternate. At lysine 47 the chain carries N6-methyllysine; alternate. Lysine 58 bears the N6,N6-dimethyllysine; alternate mark. At arginine 80 the chain carries Dimethylated arginine. An N6-(2-hydroxyisobutyryl)lysine; alternate modification is found at lysine 86. Lysine 86 bears the N6-(beta-hydroxybutyryl)lysine; alternate mark. Position 86 is an N6-acetyllysine; alternate (lysine 86). Lysine 86 carries the post-translational modification N6-lactoyllysine; alternate. An N6,N6,N6-trimethyllysine; alternate modification is found at lysine 86. Residues arginine 87 and arginine 93 each carry the omega-N-methylarginine modification. Lysine 109 is modified (N6-(2-hydroxyisobutyryl)lysine; alternate). At lysine 109 the chain carries N6-lactoyllysine; alternate. Residue lysine 109 is modified to N6-glutaryllysine; alternate. At lysine 109 the chain carries N6-methyllysine; alternate. Residue serine 113 is glycosylated (O-linked (GlcNAc) serine). The residue at position 116 (threonine 116) is a Phosphothreonine. Lysine 117 and lysine 121 each carry N6-(2-hydroxyisobutyryl)lysine; alternate. An N6-(beta-hydroxybutyryl)lysine; alternate mark is found at lysine 117 and lysine 121. Residues lysine 117 and lysine 121 each carry the N6-lactoyllysine; alternate modification. An N6-glutaryllysine; alternate mark is found at lysine 117 and lysine 121. An N6-succinyllysine; alternate mark is found at lysine 117 and lysine 121. At lysine 117 the chain carries N6-malonyllysine; alternate. At lysine 117 the chain carries N6-methylated lysine; alternate. Residue lysine 121 forms a Glycyl lysine isopeptide (Lys-Gly) (interchain with G-Cter in ubiquitin); alternate linkage.

This sequence belongs to the histone H2B family. As to quaternary structure, the nucleosome is a histone octamer containing two molecules each of H2A, H2B, H3 and H4 assembled in one H3-H4 heterotetramer and two H2A-H2B heterodimers. The octamer wraps approximately 147 bp of DNA. Post-translationally, monoubiquitination at Lys-35 (H2BK34Ub) by the MSL1/MSL2 dimer is required for histone H3 'Lys-4' (H3K4me) and 'Lys-79' (H3K79me) methylation and transcription activation at specific gene loci, such as HOXA9 and MEIS1 loci. Similarly, monoubiquitination at Lys-121 (H2BK120Ub) by the RNF20/40 complex gives a specific tag for epigenetic transcriptional activation and is also prerequisite for histone H3 'Lys-4' and 'Lys-79' methylation. It also functions cooperatively with the FACT dimer to stimulate elongation by RNA polymerase II. H2BK120Ub also acts as a regulator of mRNA splicing: deubiquitination by USP49 is required for efficient cotranscriptional splicing of a large set of exons. Phosphorylation at Ser-37 (H2BS36ph) by AMPK in response to stress promotes transcription. Phosphorylated on Ser-15 (H2BS14ph) by STK4/MST1 during apoptosis; which facilitates apoptotic chromatin condensation. Also phosphorylated on Ser-15 in response to DNA double strand breaks (DSBs), and in correlation with somatic hypermutation and immunoglobulin class-switch recombination. In terms of processing, glcNAcylation at Ser-113 promotes monoubiquitination of Lys-121. It fluctuates in response to extracellular glucose, and associates with transcribed genes. Post-translationally, ADP-ribosylated by PARP1 or PARP2 on Ser-7 (H2BS6ADPr) in response to DNA damage. H2BS6ADPr promotes recruitment of CHD1L. Mono-ADP-ribosylated on Glu-3 (H2BE2ADPr) by PARP3 in response to single-strand breaks. Poly ADP-ribosylation on Glu-36 (H2BE35ADPr) by PARP1 regulates adipogenesis: it inhibits phosphorylation at Ser-37 (H2BS36ph), thereby blocking expression of pro-adipogenetic genes. Crotonylation (Kcr) is specifically present in male germ cells and marks testis-specific genes in post-meiotic cells, including X-linked genes that escape sex chromosome inactivation in haploid cells. Crotonylation marks active promoters and enhancers and confers resistance to transcriptional repressors. It is also associated with post-meiotically activated genes on autosomes. In terms of processing, lactylated in macrophages by EP300/P300 by using lactoyl-CoA directly derived from endogenous or exogenous lactate, leading to stimulates gene transcription.

It is found in the nucleus. The protein localises to the chromosome. In terms of biological role, core component of nucleosome. Nucleosomes wrap and compact DNA into chromatin, limiting DNA accessibility to the cellular machineries which require DNA as a template. Histones thereby play a central role in transcription regulation, DNA repair, DNA replication and chromosomal stability. DNA accessibility is regulated via a complex set of post-translational modifications of histones, also called histone code, and nucleosome remodeling. This is Histone H2B type 1-D from Homo sapiens (Human).